Consider the following 37-residue polypeptide: Protease 2 large chain (37 aa).

The segment covering 1 to 14 (NDGNGRDSDPHDPG) has biased composition (basic and acidic residues). Residues 1–37 (NDGNGRDSDPHDPGDWTTAGQCGLWQPARNSQHWTLV) are disordered. Residues 28–37 (ARNSQHWTLV) are compositionally biased toward polar residues.

The protein belongs to the peptidase S8 family. As to quaternary structure, heterodimer of a large and a small chain.

The protein resides in the secreted. This chain is Protease 2 large chain, found in Achromobacter lyticus.